The following is a 466-amino-acid chain: tRNA-2-methylthio-N(6)-dimethylallyladenosine synthase (466 aa).

One can recognise an MTTase N-terminal domain in the interval 3–123 (KKLYIKTYGC…LPEMVARAVR (121 aa)). [4Fe-4S] cluster-binding residues include Cys12, Cys48, Cys86, Cys162, Cys166, and Cys169. The Radical SAM core domain occupies 148 to 381 (SPAGPSAFLS…QQLLTAQQTA (234 aa)). Residues 384 to 446 (TACVGRVQPV…ANSLSGTVVV (63 aa)) enclose the TRAM domain.

It belongs to the methylthiotransferase family. MiaB subfamily. Monomer. Requires [4Fe-4S] cluster as cofactor.

It localises to the cytoplasm. The enzyme catalyses N(6)-dimethylallyladenosine(37) in tRNA + (sulfur carrier)-SH + AH2 + 2 S-adenosyl-L-methionine = 2-methylsulfanyl-N(6)-dimethylallyladenosine(37) in tRNA + (sulfur carrier)-H + 5'-deoxyadenosine + L-methionine + A + S-adenosyl-L-homocysteine + 2 H(+). Its function is as follows. Catalyzes the methylthiolation of N6-(dimethylallyl)adenosine (i(6)A), leading to the formation of 2-methylthio-N6-(dimethylallyl)adenosine (ms(2)i(6)A) at position 37 in tRNAs that read codons beginning with uridine. This is tRNA-2-methylthio-N(6)-dimethylallyladenosine synthase from Rhodospirillum centenum (strain ATCC 51521 / SW).